The chain runs to 338 residues: Pyridoxal 5'-phosphate synthase subunit PdxS (338 aa).

Aspartate 66 is a D-ribose 5-phosphate binding site. Residue lysine 123 is the Schiff-base intermediate with D-ribose 5-phosphate of the active site. Glycine 195 provides a ligand contact to D-ribose 5-phosphate. Lysine 207 serves as a coordination point for D-glyceraldehyde 3-phosphate. D-ribose 5-phosphate contacts are provided by residues glycine 256 and 277–278 (GS).

The protein belongs to the PdxS/SNZ family. In the presence of PdxT, forms a dodecamer of heterodimers.

The catalysed reaction is aldehydo-D-ribose 5-phosphate + D-glyceraldehyde 3-phosphate + L-glutamine = pyridoxal 5'-phosphate + L-glutamate + phosphate + 3 H2O + H(+). Its pathway is cofactor biosynthesis; pyridoxal 5'-phosphate biosynthesis. Catalyzes the formation of pyridoxal 5'-phosphate from ribose 5-phosphate (RBP), glyceraldehyde 3-phosphate (G3P) and ammonia. The ammonia is provided by the PdxT subunit. Can also use ribulose 5-phosphate and dihydroxyacetone phosphate as substrates, resulting from enzyme-catalyzed isomerization of RBP and G3P, respectively. The sequence is that of Pyridoxal 5'-phosphate synthase subunit PdxS from Saccharolobus islandicus (strain Y.N.15.51 / Yellowstone #2) (Sulfolobus islandicus).